Reading from the N-terminus, the 379-residue chain is tRNA-specific 2-thiouridylase MnmA (379 aa).

Residues 16 to 23 (GLSGGVDS) and Met42 each bind ATP. The tract at residues 102–104 (NPD) is interaction with target base in tRNA. The active-site Nucleophile is the Cys107. Residues Cys107 and Cys204 are joined by a disulfide bond. Gly131 is an ATP binding site. Residues 154 to 156 (KDQ) form an interaction with tRNA region. Cys204 functions as the Cysteine persulfide intermediate in the catalytic mechanism. The interval 316–317 (RY) is interaction with tRNA.

It belongs to the MnmA/TRMU family.

It localises to the cytoplasm. It catalyses the reaction S-sulfanyl-L-cysteinyl-[protein] + uridine(34) in tRNA + AH2 + ATP = 2-thiouridine(34) in tRNA + L-cysteinyl-[protein] + A + AMP + diphosphate + H(+). Catalyzes the 2-thiolation of uridine at the wobble position (U34) of tRNA, leading to the formation of s(2)U34. This Hydrogenovibrio crunogenus (strain DSM 25203 / XCL-2) (Thiomicrospira crunogena) protein is tRNA-specific 2-thiouridylase MnmA.